Here is a 636-residue protein sequence, read N- to C-terminus: Receptor-like kinase LIP1 (636 aa).

The interval 18–57 (NAPCTTNETNDDNVEHDEFRPPVVATTKRTEEREPAEQQP) is disordered. In terms of domain architecture, Protein kinase spans 74–352 (FRQECLLGEG…SDVMVALSFL (279 aa)). ATP contacts are provided by residues 80–88 (LGEGGFGRV) and Lys103. Residue Asp201 is the Proton acceptor of the active site. Phosphoserine occurs at positions 205 and 236. Phosphothreonine is present on Thr242. Residue Tyr250 is modified to Phosphotyrosine. A disordered region spans residues 389 to 636 (FCISRKDVGN…EEEHISSDHD (248 aa)). The stretch at 403-434 (SSDSEDEEEEKEQKAEKEEESTSKKRQEQEET) forms a coiled coil. A compositionally biased stretch (basic and acidic residues) spans 413 to 431 (KEQKAEKEEESTSKKRQEQ). Residues 432–455 (EETATDSDDESDSNSEKDQEEEQS) are compositionally biased toward acidic residues. Over residues 480–489 (TNATAQSLKI) the composition is skewed to polar residues. Composition is skewed to basic and acidic residues over residues 522–531 (DSGRDHDDSS) and 554–566 (HETR…DDSP). The span at 567–576 (RNTSMRINSL) shows a compositional bias: polar residues. Basic and acidic residues-rich tracts occupy residues 588–603 (NHQT…KSED) and 619–636 (SLHR…SDHD).

Belongs to the protein kinase superfamily. Ser/Thr protein kinase family. Interacts with PRK6. Post-translationally, palmitoylated. As to expression, expressed in mature pollen and in germinating pollen tubes.

It is found in the cell membrane. The protein resides in the cytoplasm. In terms of biological role, involved in pollen tube guidance into micropyle. Participates in perception of the ovule-secreted peptide signal LURE1. The chain is Receptor-like kinase LIP1 from Arabidopsis thaliana (Mouse-ear cress).